The following is a 2919-amino-acid chain: Cadherin EGF LAG seven-pass G-type receptor 2 (2919 aa).

Residues 1 to 31 (MRSRAASAPLPTPLLPLLLLLLLLPPSPLLG) form the signal peptide. The Extracellular portion of the chain corresponds to 32 to 2380 (DQVGPCRSLG…GEILPLKTLT (2349 aa)). A disordered region spans residues 156–194 (LRAGEGSPEESLGGRRKRNVNTAPQFQPPSYQATVPENQ). A compositionally biased stretch (polar residues) spans 175–194 (VNTAPQFQPPSYQATVPENQ). Cadherin domains follow at residues 182-289 (QPPS…DPVF), 290-399 (EQQE…APQF), 400-505 (SEKR…APIF), 506-610 (VSTP…NPTF), 611-712 (TQPE…RPVF), 713-815 (QSSH…APQF), 816-921 (LRDS…PPVF), 922-1023 (EQDE…PPVL), and 1028-1146 (ILFN…SPLL). N-linked (GlcNAc...) asparagine glycans are attached at residues Asn486, Asn557, and Asn701. N-linked (GlcNAc...) asparagine glycans are attached at residues Asn1036, Asn1076, Asn1182, and Asn1212. The 59-residue stretch at 1228–1286 (DDNICLREPCENYMRCVSVLRFDSSAPFIASSSVLFRPIHPVGGLRCRCPPGFTGDYCE) folds into the EGF-like 1; atypical domain. Positions 1288-1318 (EVDLCYSRPCGPHGRCRSREGGYTCLCLDGY) constitute an EGF-like 2; calcium-binding domain. 6 disulfide bridges follow: Cys1292/Cys1303, Cys1297/Cys1312, Cys1314/Cys1323, Cys1332/Cys1343, Cys1337/Cys1353, and Cys1355/Cys1365. The EGF-like 3; calcium-binding domain maps to 1328 to 1366 (HSGRCTPGVCKNGGTCVNLLVGGFKCDCPSGDFEKPFCQ). A Laminin G-like 1 domain is found at 1367 to 1571 (VTTRSFPARS…IANNGTVPGC (205 aa)). 2 N-linked (GlcNAc...) asparagine glycosylation sites follow: Asn1501 and Asn1565. 4 disulfides stabilise this stretch: Cys1545-Cys1571, Cys1578-Cys1589, Cys1583-Cys1598, and Cys1600-Cys1609. The 37-residue stretch at 1574-1610 (KKIVCDSSICHNGGTCVNQWNAFSCECPLGFGGKSCA) folds into the EGF-like 4; calcium-binding domain. A (3R)-3-hydroxyasparagine modification is found at Asn1591. Residues 1614–1791 (ANPQRFLGSS…GESINVEPGC (178 aa)) enclose the Laminin G-like 2 domain. The N-linked (GlcNAc...) asparagine glycan is linked to Asn1741. Residues 1787–1829 (VEPGCSWPDPCDSNPCPTNSYCSNDWDSYSCSCVLGYYGDNCT) form the EGF-like 5; calcium-binding domain. Intrachain disulfides connect Cys1791-Cys1802, Cys1797-Cys1817, Cys1819-Cys1828, Cys1832-Cys1843, Cys1837-Cys1855, Cys1857-Cys1866, Cys1887-Cys1899, Cys1889-Cys1906, Cys1908-Cys1921, Cys1924-Cys1936, Cys1926-Cys1943, Cys1945-Cys1954, and Cys1957-Cys1969. Residue Asn1827 is glycosylated (N-linked (GlcNAc...) asparagine). The EGF-like 6; calcium-binding domain occupies 1830–1867 (NVCDLNPCEHQSVCTRKPNTPHGYICECLPNYLGPYCE). The EGF-like 7; calcium-binding domain occupies 1883–1922 (TCGPCNCDVSKGFDPDCNKTSGECHCKENHYRPPGSPTCL). The N-linked (GlcNAc...) asparagine glycan is linked to Asn1900. Residues 1924–1971 (CDCYPTGSLSRVCDPEDGQCPCKPGVIGRQCDRCDNPFAEVTTNGCEV) enclose the Laminin EGF-like domain. Asn2024, Asn2043, and Asn2061 each carry an N-linked (GlcNAc...) asparagine glycan. The region spanning 2199-2369 (ETTVILPESV…AVLMDMSRRE (171 aa)) is the GAIN-B domain. Residues 2216–2241 (VRSAGPGEAQETEELARRQRRHPELS) form a disordered region. Disulfide bonds link Cys2319-Cys2351 and Cys2339-Cys2353. Residues 2319–2369 (CVFWNHSILVSGTGGWSARGCEVVFRNESHVSCQCNHMTSFAVLMDMSRRE) form a GPS region. Residues Asn2323 and Asn2345 are each glycosylated (N-linked (GlcNAc...) asparagine). A helical transmembrane segment spans residues 2381-2401 (YVALGVTLAALMLTFLFLTLL). The Cytoplasmic portion of the chain corresponds to 2402–2413 (RALRSNQHGIRR). A helical membrane pass occupies residues 2414–2433 (NLTAALGLAQLVFLLGINQA). The Extracellular portion of the chain corresponds to 2434 to 2438 (DLPFA). Residues 2439 to 2459 (CTVIAILLHFLYLCTFSWALL) traverse the membrane as a helical segment. Residues 2460–2480 (EALHLYRALTEVRDVNASPMR) lie on the Cytoplasmic side of the membrane. The helical transmembrane segment at 2481–2501 (FYYMLGWGVPAFITGLAVGLD) threads the bilayer. Over 2502-2518 (PEGYGNPDFCWLSVYDT) the chain is Extracellular. A helical transmembrane segment spans residues 2519 to 2539 (LIWSFAGPVAFAVSMSVFLYI). Residues 2540-2563 (LSARASCAAQRQGFEKKGPVSGLR) lie on the Cytoplasmic side of the membrane. A helical membrane pass occupies residues 2564–2584 (SSFTVLLLLSATWLLALLSVN). Residues 2585-2591 (SDTLLFH) are Extracellular-facing. Residues 2592 to 2612 (YLFAACNCVQGPFIFLSYVVL) traverse the membrane as a helical segment. Topologically, residues 2613–2919 (SKEVRKALKF…SEFLFFNFLH (307 aa)) are cytoplasmic. Residues 2690 to 2884 (LNPGQVPPGL…PPRPPPRQSL (195 aa)) form a disordered region. Acidic residues predominate over residues 2718 to 2730 (TDSDSDLSLEDDQ). The span at 2791–2800 (GTTTKENSGS) shows a compositional bias: polar residues. Over residues 2803–2815 (LEERPRENGDALT) the composition is skewed to basic and acidic residues. Over residues 2857-2868 (GTGSSRGSSISE) the composition is skewed to low complexity.

Belongs to the G-protein coupled receptor 2 family. LN-TM7 subfamily. In terms of assembly, heterodimer of 2 chains generated by proteolytic processing; the large extracellular N-terminal fragment and the membrane-bound C-terminal fragment predominantly remain associated and non-covalently linked. The iron and 2-oxoglutarate dependent 3-hydroxylation of aspartate and asparagine is (R) stereospecific within EGF domains. In terms of processing, autoproteolytically processed at the GPS region of the GAIN-B domain; this cleavage modulates receptor activity. As to expression, expressed in the CNS and in the eye.

It localises to the cell membrane. Its function is as follows. Receptor that may have an important role in cell/cell signaling during nervous system formation. This is Cadherin EGF LAG seven-pass G-type receptor 2 from Mus musculus (Mouse).